Here is an 84-residue protein sequence, read N- to C-terminus: Large ribosomal subunit protein uL29 (84 aa).

Belongs to the universal ribosomal protein uL29 family.

The polypeptide is Large ribosomal subunit protein uL29 (Mycoplasma mobile (strain ATCC 43663 / 163K / NCTC 11711) (Mesomycoplasma mobile)).